A 400-amino-acid chain; its full sequence is Formate-dependent phosphoribosylglycinamide formyltransferase (400 aa).

Residues 21–22 (EL) and E81 contribute to the N(1)-(5-phospho-beta-D-ribosyl)glycinamide site. Residues R114, K155, 160-165 (SSGKGQ), 195-198 (EGRI), and E203 contribute to the ATP site. The ATP-grasp domain occupies 119 to 313 (RLAAEKLGLP…EFELHVRAIL (195 aa)). Residues E272 and E284 each coordinate Mg(2+). Residues D291, K360, and 367–368 (RR) each bind N(1)-(5-phospho-beta-D-ribosyl)glycinamide.

It belongs to the PurK/PurT family. As to quaternary structure, homodimer.

The enzyme catalyses N(1)-(5-phospho-beta-D-ribosyl)glycinamide + formate + ATP = N(2)-formyl-N(1)-(5-phospho-beta-D-ribosyl)glycinamide + ADP + phosphate + H(+). It functions in the pathway purine metabolism; IMP biosynthesis via de novo pathway; N(2)-formyl-N(1)-(5-phospho-D-ribosyl)glycinamide from N(1)-(5-phospho-D-ribosyl)glycinamide (formate route): step 1/1. Its function is as follows. Involved in the de novo purine biosynthesis. Catalyzes the transfer of formate to 5-phospho-ribosyl-glycinamide (GAR), producing 5-phospho-ribosyl-N-formylglycinamide (FGAR). Formate is provided by PurU via hydrolysis of 10-formyl-tetrahydrofolate. In Methylococcus capsulatus (strain ATCC 33009 / NCIMB 11132 / Bath), this protein is Formate-dependent phosphoribosylglycinamide formyltransferase.